The chain runs to 606 residues: Putative amino acid transporter AAT1 (606 aa).

The interval 1-156 (MNKKYGTSSN…DEEGTNKPKR (156 aa)) is disordered. Composition is skewed to basic and acidic residues over residues 12–25 (HDNK…ADKN) and 72–89 (SDKK…ESSK). The segment covering 140–149 (SDGDYTNDEE) has biased composition (acidic residues). Helical transmembrane passes span 175–194 (TVLF…PYVF), 200–225 (ILSI…TSSL), 246–271 (TIID…SNFL), 283–301 (LFTN…ILPI), 313–332 (FLIF…GLQT), 352–372 (HFFK…NACF), 393–412 (VILQ…FSFL), 428–449 (VSIL…PLNF), 522–539 (MWIS…ACKV), 545–567 (VIGI…LIYY), and 579–605 (RYST…LNLI).

Belongs to the amino acid/polyamine transporter 2 family.

It is found in the vacuole membrane. In terms of biological role, putative amino acid transporter. Probably transports tryptophan. Involved in maintaining the osmotic homeostasis of the digestive vacuole. Important for the timely development and growth of the asexual-stage parasites and male gametocyte maturation. The polypeptide is Putative amino acid transporter AAT1 (Plasmodium falciparum (isolate 3D7)).